A 444-amino-acid chain; its full sequence is Tubulin beta-4A chain (444 aa).

An MREI motif motif is present at residues 1–4 (MREI). GTP is bound by residues Q11, E69, S138, G142, T143, and G144. E69 provides a ligand contact to Mg(2+). S172 is subject to Phosphoserine; by CDK1. N204 and N226 together coordinate GTP. E436 carries the 5-glutamyl polyglutamate modification.

It belongs to the tubulin family. As to quaternary structure, dimer of alpha and beta chains. A typical microtubule is a hollow water-filled tube with an outer diameter of 25 nm and an inner diameter of 15 nM. Alpha-beta heterodimers associate head-to-tail to form protofilaments running lengthwise along the microtubule wall with the beta-tubulin subunit facing the microtubule plus end conferring a structural polarity. Microtubules usually have 13 protofilaments but different protofilament numbers can be found in some organisms and specialized cells. Mg(2+) serves as cofactor. In terms of processing, some glutamate residues at the C-terminus are polyglycylated, resulting in polyglycine chains on the gamma-carboxyl group. Glycylation is mainly limited to tubulin incorporated into axonemes (cilia and flagella) whereas glutamylation is prevalent in neuronal cells, centrioles, axonemes, and the mitotic spindle. Both modifications can coexist on the same protein on adjacent residues, and lowering polyglycylation levels increases polyglutamylation, and reciprocally. Cilia and flagella glycylation is required for their stability and maintenance. Flagella glycylation controls sperm motility. Some glutamate residues at the C-terminus are polyglutamylated, resulting in polyglutamate chains on the gamma-carboxyl group. Polyglutamylation plays a key role in microtubule severing by spastin (SPAST). SPAST preferentially recognizes and acts on microtubules decorated with short polyglutamate tails: severing activity by SPAST increases as the number of glutamates per tubulin rises from one to eight, but decreases beyond this glutamylation threshold. Glutamylation is also involved in cilia motility. Post-translationally, phosphorylated on Ser-172 by CDK1 during the cell cycle, from metaphase to telophase, but not in interphase. This phosphorylation inhibits tubulin incorporation into microtubules.

It is found in the cytoplasm. The protein localises to the cytoskeleton. Its function is as follows. Tubulin is the major constituent of microtubules, a cylinder consisting of laterally associated linear protofilaments composed of alpha- and beta-tubulin heterodimers. Microtubules grow by the addition of GTP-tubulin dimers to the microtubule end, where a stabilizing cap forms. Below the cap, tubulin dimers are in GDP-bound state, owing to GTPase activity of alpha-tubulin. The polypeptide is Tubulin beta-4A chain (TUBB4A) (Bos taurus (Bovine)).